Here is a 480-residue protein sequence, read N- to C-terminus: UDP-N-acetylmuramate--L-alanine ligase (480 aa).

Position 129–135 (129–135 (GTHGKTT)) interacts with ATP.

It belongs to the MurCDEF family.

The protein resides in the cytoplasm. The enzyme catalyses UDP-N-acetyl-alpha-D-muramate + L-alanine + ATP = UDP-N-acetyl-alpha-D-muramoyl-L-alanine + ADP + phosphate + H(+). Its pathway is cell wall biogenesis; peptidoglycan biosynthesis. Functionally, cell wall formation. This Mannheimia succiniciproducens (strain KCTC 0769BP / MBEL55E) protein is UDP-N-acetylmuramate--L-alanine ligase.